Here is a 689-residue protein sequence, read N- to C-terminus: Glycine--tRNA ligase beta subunit (689 aa).

Belongs to the class-II aminoacyl-tRNA synthetase family. Tetramer of two alpha and two beta subunits.

It localises to the cytoplasm. The catalysed reaction is tRNA(Gly) + glycine + ATP = glycyl-tRNA(Gly) + AMP + diphosphate. This Escherichia coli O127:H6 (strain E2348/69 / EPEC) protein is Glycine--tRNA ligase beta subunit.